A 525-amino-acid polypeptide reads, in one-letter code: GMP synthase [glutamine-hydrolyzing] (525 aa).

In terms of domain architecture, Glutamine amidotransferase type-1 spans 16-205 (PVLVVDFGAQ…LHDFAGIGAR (190 aa)). Residue Cys-93 is the Nucleophile of the active site. Active-site residues include His-179 and Glu-181. The region spanning 206 to 399 (WTPANIANAL…LGLPEEIVAR (194 aa)) is the GMPS ATP-PPase domain. 233-239 (SGGVDSA) provides a ligand contact to ATP.

In terms of assembly, homodimer.

It carries out the reaction XMP + L-glutamine + ATP + H2O = GMP + L-glutamate + AMP + diphosphate + 2 H(+). Its pathway is purine metabolism; GMP biosynthesis; GMP from XMP (L-Gln route): step 1/1. Catalyzes the synthesis of GMP from XMP. The chain is GMP synthase [glutamine-hydrolyzing] from Mycobacterium marinum (strain ATCC BAA-535 / M).